Here is a 292-residue protein sequence, read N- to C-terminus: MNSNSNKKRDPARFPAGVAQGCSTTRAGDLKHRRKHPFEKFFAQNSALFAQRFPDLARALTLPNEQLLQRIPPDYLLAAAHDGDATLAVRGTYLHSKYRPRQEAARLISQDFFTHAIAKGGYVGAGLGLGYVAELYAQQHPTHTVVLIEPDIFVFLLFLASRPLTPLLRHERLKILPAQTVPDVLQFLRATGDVSLPLFHFLPAQELNTAWFHDFTQAHRHATAQAETNKQTLQRFGPLWIRNTIKNAAQLCVRTPVNALRNCAAGSTALIIAGGPGVDASISFLPYLKKKH.

The N-terminal stretch at methionine 1 to glycine 21 is a signal peptide. Positions methionine 1–leucine 30 are disordered.

This is an uncharacterized protein from Treponema pallidum (strain Nichols).